The sequence spans 186 residues: TATA box-binding protein-like 1 (186 aa).

It belongs to the TBP family.

It localises to the cytoplasm. The protein resides in the nucleus. In terms of biological role, part of a specialized transcription system that mediates the transcription of most ribosomal proteins through the 5'-TCT-3' motif which is a core promoter element at these genes. Seems to also mediate the transcription of NF1. Does not bind the TATA box. Members of the TBP family are differentially required to regulate transcription and development during early embryogenesis. The protein is TATA box-binding protein-like 1 of Danio rerio (Zebrafish).